The chain runs to 149 residues: UPF0208 membrane protein VSAL_I2111 (149 aa).

A run of 2 helical transmembrane segments spans residues 41–61 (FAVK…MVFN) and 69–89 (SIII…WLGN).

Belongs to the UPF0208 family.

It localises to the cell inner membrane. In Aliivibrio salmonicida (strain LFI1238) (Vibrio salmonicida (strain LFI1238)), this protein is UPF0208 membrane protein VSAL_I2111.